An 812-amino-acid polypeptide reads, in one-letter code: Collagen-like protein 5 (812 aa).

N-linked (GlcNAc...) asparagine; by host glycosylation is found at N13 and N83. 3 Collagen-like domains span residues 69 to 128 (GASG…KGDD), 143 to 502 (GEKG…KGDN), and 506 to 565 (GETG…KGEA). A disordered region spans residues 71–568 (SGAQGVKGDP…PGIKGEAGTN (498 aa)). Basic and acidic residues-rich tracts occupy residues 88–112 (TKGEKGDKGDKGSKGDNGEKGEKGD), 121–435 (SKGD…ETGS), 444–523 (SKGD…KGIK), and 531–561 (VKGDKGSKGDKGDLGDTGIKGDKGEKGDPGI). N502 carries an N-linked (GlcNAc...) asparagine; by host glycan. Residues N637, N658, and N667 are each glycosylated (N-linked (GlcNAc...) asparagine; by host). Positions 730–802 (GQARTNGAST…VSASGGRGGD (73 aa)) are disordered. Over residues 752–765 (FGGGGGGASGFAKG) the composition is skewed to gly residues.

May be hydroxylated on lysine by the viral-encoded procollagen-lysine,2-oxoglutarate 5-dioxygenase.

The protein localises to the virion. In terms of biological role, may participate in the formation of a layer of cross-linked glycosylated fibrils at the viral surface thus giving it a hairy-like appearance. The chain is Collagen-like protein 5 from Acanthamoeba polyphaga (Amoeba).